A 199-amino-acid chain; its full sequence is Probable chemoreceptor glutamine deamidase CheD (199 aa).

This sequence belongs to the CheD family.

The enzyme catalyses L-glutaminyl-[protein] + H2O = L-glutamyl-[protein] + NH4(+). Probably deamidates glutamine residues to glutamate on methyl-accepting chemotaxis receptors (MCPs), playing an important role in chemotaxis. In Cereibacter sphaeroides (strain ATCC 17025 / ATH 2.4.3) (Rhodobacter sphaeroides), this protein is Probable chemoreceptor glutamine deamidase CheD.